The sequence spans 1373 residues: DNA-directed RNA polymerase subunit beta (1373 aa).

This sequence belongs to the RNA polymerase beta chain family. The RNAP catalytic core consists of 2 alpha, 1 beta, 1 beta' and 1 omega subunit. When a sigma factor is associated with the core the holoenzyme is formed, which can initiate transcription.

It carries out the reaction RNA(n) + a ribonucleoside 5'-triphosphate = RNA(n+1) + diphosphate. Functionally, DNA-dependent RNA polymerase catalyzes the transcription of DNA into RNA using the four ribonucleoside triphosphates as substrates. The sequence is that of DNA-directed RNA polymerase subunit beta from Rickettsia canadensis (strain McKiel).